The sequence spans 232 residues: Sugar fermentation stimulation protein homolog (232 aa).

This sequence belongs to the SfsA family.

This is Sugar fermentation stimulation protein homolog from Pelagibacter ubique (strain HTCC1062).